A 245-amino-acid polypeptide reads, in one-letter code: Fibroblast growth factor 13 (245 aa).

Positions 1 to 36 (MAAAIASSLIRQKRQAREREKSNACKCVSSPSKGKT) are disordered. The interval 1–62 (MAAAIASSLI…GSKKRRRRRP (62 aa)) is mediates targeting to the nucleus. Residues 67 to 201 (KGIVTKLYSR…AHFLPKPLKV (135 aa)) are mediates interaction with sodium channels. Ser-208 is subject to Phosphoserine. The interval 213-245 (TEFSRSGSGTPTKSRSVSGVLNGGKSMSHNEST) is disordered. Residues 215 to 245 (FSRSGSGTPTKSRSVSGVLNGGKSMSHNEST) are compositionally biased toward polar residues.

Belongs to the heparin-binding growth factors family. Interacts with SCN8A; regulates SCN8A activity. Interacts with SCN1A; may regulate SCN1A activity. Interacts with SCN5A; the interaction is direct and may regulate SNC5A density at membranes and function. May also interact with SCN2A and SCN11A. Interacts with MAPK8IP2; may regulate the MAPK8IP2 scaffolding activity. May be phosphorylated. In terms of tissue distribution, ubiquitously expressed. Predominantly expressed in the nervous system.

It localises to the nucleus. It is found in the cytoplasm. Its subcellular location is the cell projection. The protein localises to the filopodium. The protein resides in the growth cone. It localises to the dendrite. It is found in the cell membrane. Its subcellular location is the sarcolemma. Its function is as follows. Microtubule-binding protein which directly binds tubulin and is involved in both polymerization and stabilization of microtubules. Through its action on microtubules, may participate in the refinement of axons by negatively regulating axonal and leading processes branching. Plays a crucial role in neuron polarization and migration in the cerebral cortex and the hippocampus. Regulates voltage-gated sodium channel transport and function. May also play a role in MAPK signaling. Required for the development of axonal initial segment-targeting inhibitory GABAergic synapses made by chandelier neurons. This Homo sapiens (Human) protein is Fibroblast growth factor 13.